The primary structure comprises 61 residues: Photosystem II reaction center protein K (61 aa).

A propeptide spanning residues 1–24 is cleaved from the precursor; that stretch reads MLNTFSLIGICLNSTLYSSSFFFG. Residues 36–56 traverse the membrane as a helical segment; it reads IVDIMPVIPLFFFLLAFVWQA.

This sequence belongs to the PsbK family. As to quaternary structure, PSII is composed of 1 copy each of membrane proteins PsbA, PsbB, PsbC, PsbD, PsbE, PsbF, PsbH, PsbI, PsbJ, PsbK, PsbL, PsbM, PsbT, PsbX, PsbY, PsbZ, Psb30/Ycf12, at least 3 peripheral proteins of the oxygen-evolving complex and a large number of cofactors. It forms dimeric complexes.

The protein resides in the plastid. It localises to the chloroplast thylakoid membrane. One of the components of the core complex of photosystem II (PSII). PSII is a light-driven water:plastoquinone oxidoreductase that uses light energy to abstract electrons from H(2)O, generating O(2) and a proton gradient subsequently used for ATP formation. It consists of a core antenna complex that captures photons, and an electron transfer chain that converts photonic excitation into a charge separation. The polypeptide is Photosystem II reaction center protein K (Solanum bulbocastanum (Wild potato)).